A 103-amino-acid polypeptide reads, in one-letter code: Protamine-2 (103 aa).

The tract at residues 1 to 103 is disordered; that stretch reads MVRYRMRSLS…RTRRRRCRRY (103 aa). Serine 8 and serine 10 each carry phosphoserine. Positions 8-17 are enriched in basic and acidic residues; that stretch reads SLSERPHEVH. Over residues 23-35 the composition is skewed to low complexity; it reads GQEQGHNGQEEQG. At serine 37 the chain carries Phosphoserine. A compositionally biased stretch (basic and acidic residues) spans 39-48; sequence EHVEVYERTH. Basic residues predominate over residues 51 to 103; sequence YSHHRRRRCSRRRLYRIHRRRHRSCRRRRRRSCRHRRRHRRGCRTRRRRCRRY.

This sequence belongs to the protamine P2 family. In terms of assembly, interacts with TDRP. Proteolytic processing into mature chains is required for histone eviction during spermatogenesis. Transition proteins (TNP1 and TNP2) are required for processing. In terms of tissue distribution, testis.

The protein resides in the nucleus. It is found in the chromosome. Its function is as follows. Protamines substitute for histones in the chromatin of sperm during the haploid phase of spermatogenesis. They compact sperm DNA into a highly condensed, stable and inactive complex. The chain is Protamine-2 (PRM2) from Semnopithecus entellus (Northern plains gray langur).